The sequence spans 502 residues: NAD(P)H-quinone oxidoreductase chain 4, chloroplastic (502 aa).

13 helical membrane-spanning segments follow: residues 4–24 (YPWL…IPLL), 39–59 (LGIC…HFDI), 89–109 (IGLT…AWPV), 115–132 (LFHS…GLFT), 136–156 (ILLF…LLSM), 169–189 (FILY…TMGL), 209–229 (IALE…KLPI), 244–264 (HYST…YGLI), 276–296 (SIFA…AASI), 315–335 (MGFV…GAIL), 387–407 (SLAL…PGIV), 418–438 (IIIT…LLSM), and 466–486 (IFIS…PNLI).

This sequence belongs to the complex I subunit 4 family.

The protein resides in the plastid. It localises to the chloroplast thylakoid membrane. The catalysed reaction is a plastoquinone + NADH + (n+1) H(+)(in) = a plastoquinol + NAD(+) + n H(+)(out). It catalyses the reaction a plastoquinone + NADPH + (n+1) H(+)(in) = a plastoquinol + NADP(+) + n H(+)(out). The chain is NAD(P)H-quinone oxidoreductase chain 4, chloroplastic from Huperzia lucidula (Shining clubmoss).